We begin with the raw amino-acid sequence, 808 residues long: Probable inorganic carbon transporter subunit DabA (808 aa).

4 residues coordinate Zn(2+): C335, D337, H497, and C512.

It belongs to the inorganic carbon transporter (TC 9.A.2) DabA family. As to quaternary structure, forms a complex with DabB. The cofactor is Zn(2+).

It localises to the cell inner membrane. Part of an energy-coupled inorganic carbon pump. The polypeptide is Probable inorganic carbon transporter subunit DabA (Rhodopseudomonas palustris (strain TIE-1)).